A 156-amino-acid polypeptide reads, in one-letter code: Toxin Res (156 aa).

It belongs to the MbcT/ParT/Res family. Homodimer. Forms a complex with cognate antitoxin Xre.

Functionally, toxic component of a type II toxin-antitoxin (TA) system. Expression in E.coli inhibits cell growth; bacteriostasis is neutralized by expression of cognate antitoxin Xre. Expression in E.coli leads to almost complete depletion of intracellular NAD(+): NAD(+) levels are partially restored when coexpressed with antitoxin Xre. The chain is Toxin Res from Photorhabdus laumondii subsp. laumondii (strain DSM 15139 / CIP 105565 / TT01) (Photorhabdus luminescens subsp. laumondii).